A 122-amino-acid polypeptide reads, in one-letter code: Protein SPIRAL1-like 3 (122 aa).

2 disordered regions span residues 1–78 (MGKA…NNYF) and 96–122 (KVHA…SGNK). The segment covering 32–61 (TMGTTTTTTTTTTTDGTGGRPITTTTTTVT) has biased composition (low complexity). The residue at position 73 (Ser-73) is a Phosphoserine.

The protein belongs to the SPIRAL1 family. Ubiquitous. Preferentially expressed in above-ground organs.

Its function is as follows. Acts redundantly with SPR1 in maintaining the cortical microtubules organization essential for anisotropic cell growth. In Arabidopsis thaliana (Mouse-ear cress), this protein is Protein SPIRAL1-like 3 (SP1L3).